A 523-amino-acid polypeptide reads, in one-letter code: Tryptophan 6-halogenase SttH (523 aa).

The FAD site is built by G14, S40, I43, V46, V48, and A51. K79 is a catalytic residue. Position 97 (P97) interacts with L-tryptophan. The FAD site is built by V203 and L354. Positions 365 and 366 each coordinate chloride. I367 is an FAD binding site. Residues Y456 and Y457 each coordinate L-tryptophan.

It belongs to the flavin-dependent halogenase family. Bacterial tryptophan halogenase subfamily. Homodimer.

The enzyme catalyses L-tryptophan + FADH2 + chloride + O2 = 6-chloro-L-tryptophan + FAD + 2 H2O. It catalyses the reaction D-tryptophan + FADH2 + chloride + O2 = 6-chloro-D-tryptophan + FAD + 2 H2O. Functionally, catalyzes the chlorination of tryptophan (Trp) at C6 position to yield 6-chloro-tryptophan. Accepts both L and D-Trp as the substrates. The enzyme also uses bromide to yield 6-bromo-Trp. In vitro, can also catalyze the halogenation of 3-indolepropionic acid, N-methyltryptophan and non-indolic aromatic substrates such as kynurenine, anthranilamide and N-phenylanthranilic acid. This Streptomyces toxytricini (Actinomyces toxytricini) protein is Tryptophan 6-halogenase SttH.